Reading from the N-terminus, the 822-residue chain is Coiled-coil domain-containing protein 175 (822 aa).

Coiled coils occupy residues 129-164 (IIEISQIKRKIETMNNEVKFLTNKISELKSMNEVLG), 223-397 (IEKQ…KQMM), and 510-537 (HLIETLKEQLAQDKKDYVKKEERLIEEL).

The sequence is that of Coiled-coil domain-containing protein 175 (Ccdc175) from Mus musculus (Mouse).